A 5207-amino-acid polypeptide reads, in one-letter code: E3 ubiquitin-protein ligase RNF213 (5207 aa).

Disordered stretches follow at residues 1–20 and 27–365; these read MECP…FCSQ and PAAP…EADV. Positions 34-43 are enriched in polar residues; it reads SENNNSTMAS. Over residues 89 to 100 the composition is skewed to basic residues; that stretch reads KKKKRKKKKKGN. Low complexity-rich tracts occupy residues 101 to 117 and 136 to 157; these read KSAS…PASP and SQAQ…ATTP. A compositionally biased stretch (polar residues) spans 188–197; it reads SEAQSSPQFQ. A phosphoserine mark is found at Ser-208 and Ser-217. Residues 248–266 are compositionally biased toward polar residues; that stretch reads GGSSEPGTELQTTEQQAGA. 3 stretches are compositionally biased toward basic and acidic residues: residues 285 to 294, 309 to 346, and 353 to 362; these read AGKEMKEKTQ, HCQE…EGKN, and KNEKEQKNQE. A coiled-coil region spans residues 343–374; that stretch reads EGKNRSAAAVKNEKEQKNQEADVQEVKASTLS. A Glycyl lysine isopeptide (Lys-Gly) (interchain with G-Cter in SUMO2) cross-link involves residue Lys-1151. Ser-1258 bears the Phosphoserine mark. ATP-binding positions include 1995–2000, Glu-2098, Asp-2155, and Arg-2216; that span reads GVGKSL. At Ser-2273 the chain carries Phosphoserine. Positions 2499 and 2574 each coordinate ATP. Zn(2+)-binding residues include Cys-3997, Cys-4000, Cys-4012, His-4014, Cys-4017, Cys-4020, Cys-4032, Cys-4035, Cys-4505, and His-4509. The RING-type zinc-finger motif lies at 3997–4036; sequence CSICLGDAKDPVCLPCDHVHCLRCLRAWFASEQMICPYCL. An RZ-type zinc finger spans residues 4483–4555; it reads MPEDLLAQAR…VKDKADRTQT (73 aa). Cys-4516 serves as the catalytic Nucleophile; for E3 ubiquitin-lipopolysaccharide ligase activity. Residues Cys-4525 and Cys-4528 each coordinate Zn(2+).

This sequence belongs to the AAA ATPase family. As to quaternary structure, monomer. Interacts with UBE2L3/UBCH7; UBE2L3/UBCH7 is the most efficient ubiquitin-conjugating enzyme E2 for the ubiquitin ligase activity. Interacts with UBE2N/UBC13; promoting 'Lys-63'-linked ubiquitination of target proteins. In terms of assembly, (Microbial infection) Interacts with M.tuberculosis protein Rv3655c, which impairs caspase-8 activation and suppresses macrophage apoptosis by blocking the extrinsic pathway. In terms of processing, autoubiquitinated. In terms of tissue distribution, widely expressed (at protein level). Major isoform detected in all tissues examined. As to expression, minor isoform with restricted expression.

It localises to the cytoplasm. It is found in the cytosol. The protein localises to the lipid droplet. The enzyme catalyses S-ubiquitinyl-[E2 ubiquitin-conjugating enzyme]-L-cysteine + [acceptor protein]-L-lysine = [E2 ubiquitin-conjugating enzyme]-L-cysteine + N(6)-ubiquitinyl-[acceptor protein]-L-lysine.. It carries out the reaction ATP + H2O = ADP + phosphate + H(+). It participates in protein modification; protein ubiquitination. Functionally, atypical E3 ubiquitin ligase that can catalyze ubiquitination of both proteins and lipids, and which is involved in various processes, such as lipid metabolism, angiogenesis and cell-autonomous immunity. Acts as a key immune sensor by catalyzing ubiquitination of the lipid A moiety of bacterial lipopolysaccharide (LPS) via its RZ-type zinc-finger: restricts the proliferation of cytosolic bacteria, such as Salmonella, by generating the bacterial ubiquitin coat through the ubiquitination of LPS. Also acts indirectly by mediating the recruitment of the LUBAC complex, which conjugates linear polyubiquitin chains. Ubiquitination of LPS triggers cell-autonomous immunity, such as antibacterial autophagy, leading to degradation of the microbial invader. Involved in lipid metabolism by regulating fat storage and lipid droplet formation; act by inhibiting the lipolytic process. Also regulates lipotoxicity by inhibiting desaturation of fatty acids. Also acts as an E3 ubiquitin-protein ligase via its RING-type zinc finger: mediates 'Lys-63'-linked ubiquitination of target proteins. Involved in the non-canonical Wnt signaling pathway in vascular development: acts by mediating ubiquitination and degradation of FLNA and NFATC2 downstream of RSPO3, leading to inhibit the non-canonical Wnt signaling pathway and promoting vessel regression. Also has ATPase activity; ATPase activity is required for ubiquitination of LPS. In Homo sapiens (Human), this protein is E3 ubiquitin-protein ligase RNF213.